Consider the following 636-residue polypeptide: DNA mismatch repair protein MutL (636 aa).

The span at 332-344 shows a compositional bias: basic and acidic residues; the sequence is HAGEQGDSLRTDI. Disordered stretches follow at residues 332-360 and 417-443; these read HAGEQGDSLRTDIADAPEQPGATATPADN and ASAPADAAPAQASEPAAAPQADDSDDA. Low complexity predominate over residues 417-437; that stretch reads ASAPADAAPAQASEPAAAPQA.

This sequence belongs to the DNA mismatch repair MutL/HexB family.

This protein is involved in the repair of mismatches in DNA. It is required for dam-dependent methyl-directed DNA mismatch repair. May act as a 'molecular matchmaker', a protein that promotes the formation of a stable complex between two or more DNA-binding proteins in an ATP-dependent manner without itself being part of a final effector complex. The sequence is that of DNA mismatch repair protein MutL from Ralstonia nicotianae (strain ATCC BAA-1114 / GMI1000) (Ralstonia solanacearum).